The chain runs to 274 residues: 2,3,4,5-tetrahydropyridine-2,6-dicarboxylate N-succinyltransferase (274 aa).

Belongs to the transferase hexapeptide repeat family.

It localises to the cytoplasm. It carries out the reaction (S)-2,3,4,5-tetrahydrodipicolinate + succinyl-CoA + H2O = (S)-2-succinylamino-6-oxoheptanedioate + CoA. It functions in the pathway amino-acid biosynthesis; L-lysine biosynthesis via DAP pathway; LL-2,6-diaminopimelate from (S)-tetrahydrodipicolinate (succinylase route): step 1/3. This chain is 2,3,4,5-tetrahydropyridine-2,6-dicarboxylate N-succinyltransferase, found in Escherichia fergusonii (strain ATCC 35469 / DSM 13698 / CCUG 18766 / IAM 14443 / JCM 21226 / LMG 7866 / NBRC 102419 / NCTC 12128 / CDC 0568-73).